The primary structure comprises 90 residues: Mitochondrial import inner membrane translocase subunit Tim9 (90 aa).

The Twin CX3C motif signature appears at 24-48; it reads CFNSCVNEFGSRTVSGKEESCANNC. Cystine bridges form between Cys-24–Cys-48 and Cys-28–Cys-44.

It belongs to the small Tim family. In terms of assembly, heterohexamer; composed of 3 copies of tim-9/tin-9.1 and 3 copies of tim-10/tin-10, named soluble 70 kDa complex. The complex associates with the tim-22 component of the TIM22 complex. Interacts with multi-pass transmembrane proteins in transit.

The protein localises to the mitochondrion inner membrane. Functionally, mitochondrial intermembrane chaperone that participates in the import and insertion of multi-pass transmembrane proteins into the mitochondrial inner membrane. May also be required for the transfer of beta-barrel precursors from the TOM complex to the sorting and assembly machinery (SAM complex) of the outer membrane. Acts as a chaperone-like protein that protects the hydrophobic precursors from aggregation and guide them through the mitochondrial intermembrane space. The protein is Mitochondrial import inner membrane translocase subunit Tim9 (tin-9.1) of Caenorhabditis elegans.